Here is a 149-residue protein sequence, read N- to C-terminus: Calmodulin-like protein 3 (149 aa).

4 consecutive EF-hand domains span residues 8–43 (EQIA…LGQN), 44–79 (PTEA…KMKD), 81–116 (DSEE…LGEK), and 117–149 (LSDE…LVSK). 19 residues coordinate Ca(2+): D21, D23, D25, S27, E32, D57, D59, N61, T63, E68, D94, D96, N98, E105, D130, D132, D134, Q136, and E141.

This sequence belongs to the calmodulin family. Interacts with MYO10, the interaction is calcium-dependent and essential for MYO10 function in filopodial extension.

Functionally, may function as a specific light chain of unconventional myosin-10 (MYO10), also enhances MYO10 translation, possibly by acting as a chaperone for the emerging MYO10 heavy chain protein. May compete with calmodulin by binding, with different affinities, to cellular substrates. In Mus musculus (Mouse), this protein is Calmodulin-like protein 3 (Calml3).